The chain runs to 248 residues: Malonyl-[acyl-carrier protein] O-methyltransferase 2 (248 aa).

Belongs to the methyltransferase superfamily.

It catalyses the reaction malonyl-[ACP] + S-adenosyl-L-methionine = malonyl-[ACP] methyl ester + S-adenosyl-L-homocysteine. It participates in cofactor biosynthesis; biotin biosynthesis. Converts the free carboxyl group of a malonyl-thioester to its methyl ester by transfer of a methyl group from S-adenosyl-L-methionine (SAM). It allows to synthesize pimeloyl-ACP via the fatty acid synthetic pathway. This is Malonyl-[acyl-carrier protein] O-methyltransferase 2 from Coxiella burnetii (strain RSA 493 / Nine Mile phase I).